Here is a 503-residue protein sequence, read N- to C-terminus: ATP synthase subunit alpha (503 aa).

Residue 170–177 (GDRATGKT) participates in ATP binding.

This sequence belongs to the ATPase alpha/beta chains family. In terms of assembly, F-type ATPases have 2 components, CF(1) - the catalytic core - and CF(0) - the membrane proton channel. CF(1) has five subunits: alpha(3), beta(3), gamma(1), delta(1), epsilon(1). CF(0) has three main subunits: a(1), b(2) and c(9-12). The alpha and beta chains form an alternating ring which encloses part of the gamma chain. CF(1) is attached to CF(0) by a central stalk formed by the gamma and epsilon chains, while a peripheral stalk is formed by the delta and b chains.

It is found in the cell inner membrane. It carries out the reaction ATP + H2O + 4 H(+)(in) = ADP + phosphate + 5 H(+)(out). Functionally, produces ATP from ADP in the presence of a proton gradient across the membrane. The alpha chain is a regulatory subunit. This Aquifex aeolicus (strain VF5) protein is ATP synthase subunit alpha.